Here is a 223-residue protein sequence, read N- to C-terminus: Deoxyribose-phosphate aldolase (223 aa).

Asp89 (proton donor/acceptor) is an active-site residue. The active-site Schiff-base intermediate with acetaldehyde is Lys152. Lys181 acts as the Proton donor/acceptor in catalysis.

This sequence belongs to the DeoC/FbaB aldolase family. DeoC type 1 subfamily.

It is found in the cytoplasm. The catalysed reaction is 2-deoxy-D-ribose 5-phosphate = D-glyceraldehyde 3-phosphate + acetaldehyde. It functions in the pathway carbohydrate degradation; 2-deoxy-D-ribose 1-phosphate degradation; D-glyceraldehyde 3-phosphate and acetaldehyde from 2-deoxy-alpha-D-ribose 1-phosphate: step 2/2. In terms of biological role, catalyzes a reversible aldol reaction between acetaldehyde and D-glyceraldehyde 3-phosphate to generate 2-deoxy-D-ribose 5-phosphate. This Bacillus cereus (strain ATCC 14579 / DSM 31 / CCUG 7414 / JCM 2152 / NBRC 15305 / NCIMB 9373 / NCTC 2599 / NRRL B-3711) protein is Deoxyribose-phosphate aldolase.